A 413-amino-acid chain; its full sequence is Alpha-1-antitrypsin 1-2 (413 aa).

Positions 1-24 are cleaved as a signal peptide; the sequence is MTPSISWGLLLLAGLCCMVPSFLA. N64, N101, and N265 each carry an N-linked (GlcNAc...) asparagine glycan. Residues 368-387 form an RCL region; it reads AATVFEAVPMSMPPILRFDH.

The protein belongs to the serpin family.

The protein localises to the secreted. In terms of biological role, inhibitor of serine proteases. Its primary target is elastase, but it also has a moderate affinity for plasmin and thrombin. This chain is Alpha-1-antitrypsin 1-2 (Serpina1b), found in Mus musculus (Mouse).